Reading from the N-terminus, the 529-residue chain is MWGACLLLLGLSLQVCPSVIPVEEENPAFWNRKAAEALDAAKKLKPIQTSAKNLVILMGDGMGVSTVTATRILKGQQQGHLGPETQLAMDRFPHMALSKTYNTDKQIPDSAGTGTAFLCGVKTNMKVIGLSAAARFNQCNTTWGNEVVSVMHRAKKAGKSVGVVTTTSVQHASPAGTYAHTVNRGWYSDAQMPASALQDGCKDISTQLISNMDIDVILGGGRKFMFPKGTPDQEYPTDTKQAGTRLDGRNLVQEWLAKHQGARYVWNRSELIQASLNRSVTHLMGLFEPNDMKYEIHRDPAQDPSLAEMTEVAVRMLSRNPKGFYLFVEGGRIDHGHHETVAYRALTEAVMFDSAVDKADKLTSEQDTMILVTADHSHVFSFGGYTQRGASIFGLAPFKAEDGKSFTSILYGNGPGYKLHNGARADVTEEESSNPTYQQQAAVPLSSETHSGEDVAIFARGPQAHLVHGVQEQNYIAHVMAFAACLEPYTDCGLASPAGQSSAVSPGYMSTLLCLLAGKMLMLMAAAEP.

A signal peptide spans Met-1–Ser-18. Asp-60 lines the Mg(2+) pocket. Positions 60 and 110 each coordinate Zn(2+). Ser-110 (phosphoserine intermediate) is an active-site residue. Cys-139 and Cys-201 are joined by a disulfide. N-linked (GlcNAc...) asparagine glycosylation is present at Asn-140. Residue Ser-173 coordinates Mg(2+). Glu-234 provides a ligand contact to Ca(2+). N-linked (GlcNAc...) asparagine glycans are attached at residues Asn-267 and Asn-277. Ca(2+) is bound by residues Phe-287, Glu-288, and Asp-303. Glu-329 contacts Mg(2+). Positions 334, 338, 375, 376, and 450 each coordinate Zn(2+). A disulfide bond links Cys-485 and Cys-492. A lipid anchor (GPI-anchor amidated serine) is attached at Ser-502. Residues Ala-503–Pro-529 constitute a propeptide, removed in mature form.

Belongs to the alkaline phosphatase family. As to quaternary structure, homodimer. It depends on Mg(2+) as a cofactor. The cofactor is Zn(2+). Ca(2+) is required as a cofactor. In terms of tissue distribution, embryo and testis.

Its subcellular location is the cell membrane. It carries out the reaction a phosphate monoester + H2O = an alcohol + phosphate. With respect to regulation, inhibited by L-leucine, EDTA and heat. Alkaline phosphatase that can hydrolyze various phosphate compounds. This chain is Alkaline phosphatase, germ cell type (Alpg), found in Mus musculus (Mouse).